Reading from the N-terminus, the 341-residue chain is Ribulose-5-phosphate reductase 2 (341 aa).

The Zn(2+) site is built by Cys-38, His-64, Glu-65, and Glu-144.

The protein belongs to the zinc-containing alcohol dehydrogenase family. Heterodimer together with TarI. The cofactor is Zn(2+).

The catalysed reaction is D-ribitol 5-phosphate + NADP(+) = D-ribulose 5-phosphate + NADPH + H(+). It participates in cell wall biogenesis; poly(ribitol phosphate) teichoic acid biosynthesis. Catalyzes the NADPH dependent reduction of D-ribulose 5-phosphate to D-ribitol 5-phosphate. The polypeptide is Ribulose-5-phosphate reductase 2 (Staphylococcus aureus (strain NCTC 8325 / PS 47)).